The following is a 384-amino-acid chain: Ribosomal RNA small subunit methyltransferase H (384 aa).

Residues 99–101, aspartate 118, tyrosine 145, aspartate 169, and glutamine 176 contribute to the S-adenosyl-L-methionine site; that span reads GGH.

It belongs to the methyltransferase superfamily. RsmH family.

It is found in the cytoplasm. The catalysed reaction is cytidine(1402) in 16S rRNA + S-adenosyl-L-methionine = N(4)-methylcytidine(1402) in 16S rRNA + S-adenosyl-L-homocysteine + H(+). Its function is as follows. Specifically methylates the N4 position of cytidine in position 1402 (C1402) of 16S rRNA. This Mycobacteroides abscessus (strain ATCC 19977 / DSM 44196 / CCUG 20993 / CIP 104536 / JCM 13569 / NCTC 13031 / TMC 1543 / L948) (Mycobacterium abscessus) protein is Ribosomal RNA small subunit methyltransferase H.